A 596-amino-acid polypeptide reads, in one-letter code: Signal peptide peptidase-like 2B (596 aa).

Positions 1–21 (MAARWAQFLLFSLLSLPQVYC) are cleaved as a signal peptide. Residues 22 to 170 (EYGMVHVLSE…APNEPVLDYN (149 aa)) lie on the Lumenal side of the membrane. Positions 53–147 (HDLGKASLLQ…LLSYSDMLDI (95 aa)) constitute a PA domain. The N-linked (GlcNAc...) asparagine glycan is linked to Asn93. A helical transmembrane segment spans residues 171–191 (MVIIFVMAVGTVAIGGYWAGS). Over 192–219 (RDVKERYMKHKRDDGAEKHEDETVDVTP) the chain is Cytoplasmic. The chain crosses the membrane as a helical span at residues 220 to 240 (IMICVFVVMCCSMLVLLYFFY). Over 241–242 (DH) the chain is Lumenal. A helical transmembrane segment spans residues 243 to 263 (LVYVIIGIFCLAASIGLYSCL). At 264–289 (SPFVRRFPLGKCRIPDNNLPYFHKRP) the chain is on the cytoplasmic side. Residues 290-310 (QVRILLLAVFCISVSVVWGVF) form a helical membrane-spanning segment. The Lumenal portion of the chain corresponds to 311 to 315 (RNEDQ). A helical transmembrane segment spans residues 316–336 (WAWVLQDALGIAFCLYMLKTI). Topologically, residues 337–344 (RLPTFKGC) are cytoplasmic. Residues 345–365 (TLLLLVLFVYDVFFVFITPFL) traverse the membrane as a helical segment. The active site involves Asp355. Over 366–408 (TKTGESIMVEVAAGPSDSATHEKLPMVLKVPRLNSSPLALCDR) the chain is Lumenal. Residues 409-429 (PFSLLGFGDILVPGLLVAYCH) traverse the membrane as a helical segment. Asp417 is an active-site residue. Over 430–441 (RFDIQVQSSRVY) the chain is Cytoplasmic. The helical transmembrane segment at 442-462 (FVACTIAYGIGLLVTFVALAL) threads the bilayer. Residues 463–466 (MQMG) lie on the Lumenal side of the membrane. Residues 467 to 487 (QPALLYLVPCTLITSFSVALW) traverse the membrane as a helical segment. Residues 468-470 (PAL) carry the PAL motif. The Cytoplasmic portion of the chain corresponds to 488–596 (RKELAMFWTG…SLNLEQKQLE (109 aa)). The tract at residues 543-596 (KELHSPTLAAEEPADNDTKTEQSEVSIAQSEEAAGHNKDDLESKSLNLEQKQLE) is disordered. A compositionally biased stretch (basic and acidic residues) spans 575 to 585 (AAGHNKDDLES). Over residues 586 to 596 (KSLNLEQKQLE) the composition is skewed to polar residues.

It belongs to the peptidase A22B family.

It localises to the cell membrane. It is found in the golgi apparatus membrane. The protein localises to the lysosome membrane. The protein resides in the endosome membrane. Its subcellular location is the membrane. Functionally, intramembrane-cleaving aspartic protease (I-CLiP) that cleaves type II membrane signal peptides in the hydrophobic plane of the membrane. The polypeptide is Signal peptide peptidase-like 2B (Gallus gallus (Chicken)).